A 555-amino-acid polypeptide reads, in one-letter code: Glutamine--tRNA ligase (555 aa).

The short motif at 34 to 44 (PEPNGYLHIGH) is the 'HIGH' region element. Residues 35 to 37 (EPN) and 41 to 47 (HIGHAKS) contribute to the ATP site. The L-glutamine site is built by D67 and Y212. ATP is bound by residues T231, 261 to 262 (RL), and 269 to 271 (MSK). The 'KMSKS' region signature appears at 268-272 (VMSKR). The interaction with tRNA stretch occupies residues 317-324 (TKQDNTIE).

Belongs to the class-I aminoacyl-tRNA synthetase family. In terms of assembly, monomer.

It localises to the cytoplasm. It carries out the reaction tRNA(Gln) + L-glutamine + ATP = L-glutaminyl-tRNA(Gln) + AMP + diphosphate. This chain is Glutamine--tRNA ligase, found in Salmonella agona (strain SL483).